We begin with the raw amino-acid sequence, 165 residues long: Nucleotide-binding protein P9301_05061 (165 aa).

Belongs to the YajQ family.

Functionally, nucleotide-binding protein. This is Nucleotide-binding protein P9301_05061 from Prochlorococcus marinus (strain MIT 9301).